We begin with the raw amino-acid sequence, 741 residues long: Nuclear poly(A) polymerase 4 (741 aa).

Residues 101–103, 113–116, 114–116, aspartate 169, lysine 230, tyrosine 239, and 248–249 each bind ATP; these read FGS, ADID, DID, and GV. 3 residues coordinate Mg(2+): aspartate 114, aspartate 116, and aspartate 169. The Nuclear localization signal motif lies at 485 to 492; sequence RRRQLPPF. Disordered stretches follow at residues 494 to 556 and 683 to 741; these read FPNG…LSPQ and YEGF…RLLT. Residues 534–551 are compositionally biased toward basic and acidic residues; the sequence is KNDSEMMDVRPEKPEKRA. Over residues 701–717 the composition is skewed to polar residues; sequence LYSQSGMSEDLQSNSLV. A compositionally biased stretch (basic and acidic residues) spans 721–731; that stretch reads EKSEDRARSES. A compositionally biased stretch (polar residues) spans 732-741; that stretch reads FQKSQIRLLT.

Belongs to the poly(A) polymerase family. Monomer. Forms a complex with cleavage and polyadenylation specificity factor (CPSF) subunits CFIS2, FIPS3, PAPS1, PABN1, PABN2, PABN3 and FIPS5. Mg(2+) is required as a cofactor. Requires Mn(2+) as cofactor. As to expression, mostly expressed in flowers (very active in pollen, sepals, styles, and stigmas), cotyledons and hypocotyls, and, to a lower extent, in roots (confined to the vascular tissue in the radicle) and leaves (in the vascular tissue and leaf petioles). Barely detected in stems. Active in the primary and secondary root systems.

The protein resides in the nucleus. The enzyme catalyses RNA(n) + ATP = RNA(n)-3'-adenine ribonucleotide + diphosphate. In terms of biological role, essential protein. Polymerase that creates the 3'-poly(A) tail of mRNA's. Also required for the endoribonucleolytic cleavage reaction at some polyadenylation sites. May acquire specificity through interaction with a cleavage and polyadenylation specificity factor (CPSF) at its C-terminus. This is Nuclear poly(A) polymerase 4 from Arabidopsis thaliana (Mouse-ear cress).